Reading from the N-terminus, the 446-residue chain is Tubulin beta-2 chain (446 aa).

Positions 11, 69, 138, 142, 143, 144, 204, and 226 each coordinate GTP. Glu69 contacts Mg(2+). Positions 424–446 (QYQEATADEEGEFDEDEEGGGDE) are disordered. Positions 429 to 446 (TADEEGEFDEDEEGGGDE) are enriched in acidic residues.

It belongs to the tubulin family. In terms of assembly, dimer of alpha and beta chains. A typical microtubule is a hollow water-filled tube with an outer diameter of 25 nm and an inner diameter of 15 nM. Alpha-beta heterodimers associate head-to-tail to form protofilaments running lengthwise along the microtubule wall with the beta-tubulin subunit facing the microtubule plus end conferring a structural polarity. Microtubules usually have 13 protofilaments but different protofilament numbers can be found in some organisms and specialized cells. Requires Mg(2+) as cofactor. As to expression, testis specific.

Its subcellular location is the cytoplasm. It is found in the cytoskeleton. In terms of biological role, tubulin is the major constituent of microtubules, a cylinder consisting of laterally associated linear protofilaments composed of alpha- and beta-tubulin heterodimers. Microtubules grow by the addition of GTP-tubulin dimers to the microtubule end, where a stabilizing cap forms. Below the cap, tubulin dimers are in GDP-bound state, owing to GTPase activity of alpha-tubulin. The chain is Tubulin beta-2 chain (betaTub85D) from Drosophila melanogaster (Fruit fly).